A 173-amino-acid chain; its full sequence is RxLR effector protein PITG_10232 (173 aa).

A signal peptide spans 1 to 24 (MRLGYLIVGCAVALLATTDGVVDA). The interval 25 to 64 (SSKHKQLSTDVPRPADDISSERFLRSQDTPEDDGNPAHED) is disordered. The segment covering 37–49 (RPADDISSERFLR) has biased composition (basic and acidic residues). Positions 46–65 (RFLRSQDTPEDDGNPAHEDR) match the RxLR-dEER motif.

Belongs to the RxLR effector family.

It is found in the secreted. Its subcellular location is the host nucleus. It localises to the host cytoplasm. Functionally, effector that leads to host programmed cell death. This is RxLR effector protein PITG_10232 from Phytophthora infestans (strain T30-4) (Potato late blight agent).